Here is a 1451-residue protein sequence, read N- to C-terminus: Spike glycoprotein (1451 aa).

An N-terminal signal peptide occupies residues 1–31 (MIVLTLCLFLFLYSSVSCTSNNDCVQVNVTQ). An S1 region spans residues 32-779 (LPGNENIIKD…WTTTPNFYYY (748 aa)). Topologically, residues 32-1392 (LPGNENIIKD…NRIETYVKWP (1361 aa)) are virion surface. Residues 660 to 803 (VIYEEGDNIV…IDNDIDCEPI (144 aa)) form an interaction with host ANPEP region. Residues 780–1451 (SIYNYTNVMN…YEPIEKVHVH (672 aa)) are S2. A fusion peptide region spans residues 1024 to 1045 (TGGITLGALSGGAVAIPFAVAV). The heptad repeat 1 (HR1) stretch occupies residues 1039–1158 (IPFAVAVQAR…QVDRLITGRL (120 aa)). 2 coiled-coil regions span residues 1106-1150 (QDVV…DAQV) and 1340-1382 (TYLN…LEWL). The interval 1307–1404 (PDYIDINQTV…VWLLIGLVVI (98 aa)) is heptad repeat 2 (HR2). The chain crosses the membrane as a helical span at residues 1393–1412 (WYVWLLIGLVVIFCIPILLF). Residues 1413–1451 (CCCSTGCCGCIGCLGSCCHSICSRGQFESYEPIEKVHVH) lie on the Intravirion side of the membrane. A KxHxx motif is present at residues 1447–1451 (KVHVH).

This sequence belongs to the alphacoronaviruses spike protein family. Homotrimer. During virus morphogenesis, found in a complex with M and HE proteins. Interacts with host ANPEP.

It localises to the virion membrane. The protein localises to the host endoplasmic reticulum-Golgi intermediate compartment membrane. S1 region attaches the virion to the cell membrane by interacting with host ANPEP/aminopeptidase N, initiating the infection. Binding to the receptor probably induces conformational changes in the S glycoprotein unmasking the fusion peptide of S2 region and activating membranes fusion. S2 region belongs to the class I viral fusion protein. Under the current model, the protein has at least 3 conformational states: pre-fusion native state, pre-hairpin intermediate state, and post-fusion hairpin state. During viral and target cell membrane fusion, the coiled coil regions (heptad repeats) regions assume a trimer-of-hairpins structure, positioning the fusion peptide in close proximity to the C-terminal region of the ectodomain. The formation of this structure appears to drive apposition and subsequent fusion of viral and target cell membranes. The protein is Spike glycoprotein of Canine coronavirus (strain Insavc-1) (CCoV).